The following is a 248-amino-acid chain: MKLNVSYPATGCQKLFEVNDEHKLRVFYEKHMGQVVEADILGDEWKGYMLRISGGNDKQGFPMKQGVLTHDRVRLLLKKGHSCYRPRRTGERKRKSVRGCIVDANMSVLALVIVKKGEKDIPGLTDTSVPRRLGPKRASKIRKLYNLSKVDDVRPYVIRRPLPAKDNKKAISKAPKIQRLITPVVLQRKRRRIALKKKRQAASKEAAADYAKLLAQRKKESKAKREEAKRRRSASMRESKSSISSDKK.

Residues 213 to 248 (LLAQRKKESKAKREEAKRRRSASMRESKSSISSDKK) are disordered. The segment covering 223-248 (AKREEAKRRRSASMRESKSSISSDKK) has biased composition (basic and acidic residues).

Belongs to the eukaryotic ribosomal protein eS6 family. In terms of assembly, component of the small ribosomal subunit. Part of the small subunit (SSU) processome, composed of more than 70 proteins and the RNA chaperone small nucleolar RNA (snoRNA) U3. In terms of processing, ribosomal protein S6 is the major substrate of protein kinases in eukaryote ribosomes.

The protein localises to the cytoplasm. It localises to the nucleus. The protein resides in the nucleolus. In terms of biological role, component of the 40S small ribosomal subunit. Plays an important role in controlling cell growth and proliferation through the selective translation of particular classes of mRNA. Part of the small subunit (SSU) processome, first precursor of the small eukaryotic ribosomal subunit. During the assembly of the SSU processome in the nucleolus, many ribosome biogenesis factors, an RNA chaperone and ribosomal proteins associate with the nascent pre-rRNA and work in concert to generate RNA folding, modifications, rearrangements and cleavage as well as targeted degradation of pre-ribosomal RNA by the RNA exosome. In Glossina morsitans morsitans (Savannah tsetse fly), this protein is Small ribosomal subunit protein eS6 (RpS6).